The sequence spans 665 residues: GRB2-associated-binding protein 2 (665 aa).

Ser2 carries the phosphoserine modification. Residues 8-119 enclose the PH domain; sequence DVVCTGWLRK…WVQSICQICG (112 aa). Residues 131–183 form a disordered region; the sequence is RNLSSASHGPRSSPAEFSSSQHLLRERKSSAPSHSSQPTLFTFEPPMTSHMQP. Ser135, Ser142, Ser143, Ser149, Ser150, Ser160, Ser165, Ser211, Ser220, and Ser261 each carry phosphoserine. Positions 160-170 are enriched in polar residues; that stretch reads SAPSHSSQPTL. Thr262 carries the post-translational modification Phosphothreonine. Tyr263 is subject to Phosphotyrosine. Thr275 is modified (phosphothreonine). Phosphoserine is present on residues Ser278 and Ser282. Residue Thr284 is modified to Phosphothreonine. A Phosphotyrosine modification is found at Tyr290. A Phosphothreonine modification is found at Thr328. Disordered regions lie at residues 340 to 442 and 491 to 517; these read TSGD…ENYV and PSRG…PTPL. Residues 348–355 carry the SH3-binding motif; sequence PPPRPPKP. A Phosphoserine modification is found at Ser365. Thr382 and Thr388 each carry phosphothreonine. Position 402 is a phosphoserine (Ser402). Residue Thr405 is modified to Phosphothreonine. The span at 412–423 shows a compositional bias: low complexity; the sequence is GSGESASWSAES. 2 positions are modified to phosphoserine: Ser420 and Ser423. The residue at position 441 (Tyr441) is a Phosphotyrosine. The SH3-binding signature appears at 499–508; that stretch reads PPPVNRNLKP. Phosphoserine is present on Ser532. Composition is skewed to polar residues over residues 548 to 566 and 578 to 600; these read SSSQ…STDS and NPVS…STGS. The segment at 548 to 631 is disordered; the sequence is SSSQYCRPIS…SSVTSDEKVD (84 aa). Ser612 is modified (phosphoserine). Tyr632 bears the Phosphotyrosine mark. The span at 646–659 shows a compositional bias: polar residues; the sequence is TMQEWTDVRQSSEP. The segment at 646–665 is disordered; the sequence is TMQEWTDVRQSSEPSKGAKL.

Belongs to the GAB family. Part of a complex composed of EEIG1, TNFRSF11A/RANK, PLCG2, GAB2, TEC and BTK; complex formation increases in the presence of TNFSF11/RANKL. Interacts with HCK. Interacts with SHC1; may mediate interaction with receptors. Interacts with SYK. Interacts with PI-3 kinase. Interacts with GRB2 (via SH3 2 domain). Interacts (phosphorylated) with PTPN11. Interacts with TNFRSF11A (via cytoplasmic domain). Interacts (phosphorylated) with 14-3-3 family proteins SFN, YWHAB, YWHAE, YWHAG, YWHAH, YWHAQ and YWHAZ; prevents interaction with GRB2 and attenuates GAB2 signaling. Phosphorylated upon EGF stimulation. Phosphorylated on tyrosine residues by HCK upon IL6 signaling. Phosphorylated on tyrosine residue(s) by the thrombopoietin receptor (TPOR), stem cell factor receptor (SCFR), and T-cell and B-cell antigen receptors, gp130, IL-2R and IL-3R. Phosphorylated upon stimulation of TNFRSF11A/RANK by TNFSF11/RANKL. In terms of processing, dephosphorylated by PTPN11.

It is found in the cytoplasm. The protein resides in the cell membrane. The protein localises to the membrane raft. Functionally, adapter protein which acts downstream of several membrane receptors including cytokine, antigen, hormone, cell matrix and growth factor receptors to regulate multiple signaling pathways. Regulates osteoclast differentiation mediating the TNFRSF11A/RANK signaling. In allergic response, it plays a role in mast cells activation and degranulation through PI-3-kinase regulation. Also involved in the regulation of cell proliferation and hematopoiesis. The polypeptide is GRB2-associated-binding protein 2 (Gab2) (Rattus norvegicus (Rat)).